A 544-amino-acid chain; its full sequence is Chaperonin GroEL 1 (544 aa).

Residues 30 to 33 (TLGP), Lys51, 87 to 91 (DGTTT), Gly415, 481 to 483 (DAL), and Asp497 each bind ATP.

This sequence belongs to the chaperonin (HSP60) family. In terms of assembly, forms a cylinder of 14 subunits composed of two heptameric rings stacked back-to-back. Interacts with the co-chaperonin GroES.

Its subcellular location is the cytoplasm. It catalyses the reaction ATP + H2O + a folded polypeptide = ADP + phosphate + an unfolded polypeptide.. Its function is as follows. Together with its co-chaperonin GroES, plays an essential role in assisting protein folding. The GroEL-GroES system forms a nano-cage that allows encapsulation of the non-native substrate proteins and provides a physical environment optimized to promote and accelerate protein folding. The sequence is that of Chaperonin GroEL 1 from Chlamydia pneumoniae (Chlamydophila pneumoniae).